A 68-amino-acid polypeptide reads, in one-letter code: U1-hexatoxin-Hv1a (68 aa).

Intrachain disulfides connect C3/C14, C8/C22, C13/C48, C32/C56, and C50/C63.

Belongs to the MIT-like AcTx family. In terms of tissue distribution, expressed by the venom gland.

It localises to the secreted. The chain is U1-hexatoxin-Hv1a from Hadronyche versuta (Blue mountains funnel-web spider).